We begin with the raw amino-acid sequence, 279 residues long: Oxygen-dependent coproporphyrinogen-III oxidase (279 aa).

S102 provides a ligand contact to substrate. Residues H106 and H116 each contribute to the a divalent metal cation site. H116 functions as the Proton donor in the catalytic mechanism. 118–120 (NTR) contributes to the substrate binding site. Residues H149 and H179 each coordinate a divalent metal cation. The important for dimerization stretch occupies residues 244 to 279 (YVEFNLLYDRGTKFGLMTDGNVEAILMSLPPEVKFN).

This sequence belongs to the aerobic coproporphyrinogen-III oxidase family. As to quaternary structure, homodimer. A divalent metal cation serves as cofactor.

The protein localises to the cytoplasm. It catalyses the reaction coproporphyrinogen III + O2 + 2 H(+) = protoporphyrinogen IX + 2 CO2 + 2 H2O. Its pathway is porphyrin-containing compound metabolism; protoporphyrin-IX biosynthesis; protoporphyrinogen-IX from coproporphyrinogen-III (O2 route): step 1/1. Its function is as follows. Involved in the heme biosynthesis. Catalyzes the aerobic oxidative decarboxylation of propionate groups of rings A and B of coproporphyrinogen-III to yield the vinyl groups in protoporphyrinogen-IX. This Rickettsia rickettsii (strain Iowa) protein is Oxygen-dependent coproporphyrinogen-III oxidase.